A 195-amino-acid polypeptide reads, in one-letter code: FMN-dependent NADH:quinone oxidoreductase 2 (195 aa).

FMN contacts are provided by residues 16-18 (SVS) and 85-88 (MWNL).

It belongs to the azoreductase type 1 family. As to quaternary structure, homodimer. Requires FMN as cofactor.

It catalyses the reaction 2 a quinone + NADH + H(+) = 2 a 1,4-benzosemiquinone + NAD(+). The catalysed reaction is N,N-dimethyl-1,4-phenylenediamine + anthranilate + 2 NAD(+) = 2-(4-dimethylaminophenyl)diazenylbenzoate + 2 NADH + 2 H(+). Quinone reductase that provides resistance to thiol-specific stress caused by electrophilic quinones. Functionally, also exhibits azoreductase activity. Catalyzes the reductive cleavage of the azo bond in aromatic azo compounds to the corresponding amines. The sequence is that of FMN-dependent NADH:quinone oxidoreductase 2 from Photobacterium profundum (strain SS9).